Consider the following 245-residue polypeptide: Small ribosomal subunit protein uS2 (245 aa).

Positions 226-245 (GGGANVGEMENPPVEATADA) are disordered.

This sequence belongs to the universal ribosomal protein uS2 family.

The polypeptide is Small ribosomal subunit protein uS2 (Erythrobacter litoralis (strain HTCC2594)).